The sequence spans 392 residues: Elongation factor Tu 2 (392 aa).

The region spanning 10–201 is the tr-type G domain; sequence KPHVNIGTIG…AVDSYIPTPE (192 aa). A G1 region spans residues 19–26; the sequence is GHVDHGKT. Position 19 to 26 (19 to 26) interacts with GTP; it reads GHVDHGKT. T26 is a binding site for Mg(2+). The tract at residues 55–59 is G2; the sequence is GITIS. The interval 76–79 is G3; sequence DCPG. GTP is bound by residues 76–80 and 131–134; these read DCPGH and NKVD. The segment at 131-134 is G4; the sequence is NKVD. The interval 169 to 171 is G5; the sequence is SAL.

This sequence belongs to the TRAFAC class translation factor GTPase superfamily. Classic translation factor GTPase family. EF-Tu/EF-1A subfamily. As to quaternary structure, monomer.

The protein localises to the cytoplasm. It carries out the reaction GTP + H2O = GDP + phosphate + H(+). Functionally, GTP hydrolase that promotes the GTP-dependent binding of aminoacyl-tRNA to the A-site of ribosomes during protein biosynthesis. In Rhizobium etli (strain ATCC 51251 / DSM 11541 / JCM 21823 / NBRC 15573 / CFN 42), this protein is Elongation factor Tu 2.